Reading from the N-terminus, the 123-residue chain is Large ribosomal subunit protein uL29 (123 aa).

This sequence belongs to the universal ribosomal protein uL29 family.

The sequence is that of Large ribosomal subunit protein uL29 (RPL35) from Theileria parva (East coast fever infection agent).